The chain runs to 139 residues: Endoribonuclease YbeY (139 aa).

3 residues coordinate Zn(2+): His-107, His-111, and Asp-117.

Belongs to the endoribonuclease YbeY family. The cofactor is Zn(2+).

It is found in the cytoplasm. Its function is as follows. Single strand-specific metallo-endoribonuclease involved in late-stage 70S ribosome quality control and in maturation of the 3' terminus of the 16S rRNA. The protein is Endoribonuclease YbeY of Azobacteroides pseudotrichonymphae genomovar. CFP2.